A 136-amino-acid polypeptide reads, in one-letter code: MDVEKLIAESKKAREQAYVPYSKFPVGAALLAEDGTIYHGCNIENSAYSMTNCAERTAFFKAVSDGVRSFKALAVVADTEGPVSPCGACRQVIAEFCNGSMPVYLTNLKGDIEETTVAKLLPGAFSKEDLSYAAEQ.

The CMP/dCMP-type deaminase domain maps to Met1–Glu128. Asn42–Glu44 serves as a coordination point for substrate. A Zn(2+)-binding site is contributed by Cys53. Glu55 functions as the Proton donor in the catalytic mechanism. Zn(2+) contacts are provided by Cys86 and Cys89.

This sequence belongs to the cytidine and deoxycytidylate deaminase family. Requires Zn(2+) as cofactor.

It catalyses the reaction cytidine + H2O + H(+) = uridine + NH4(+). It carries out the reaction 2'-deoxycytidine + H2O + H(+) = 2'-deoxyuridine + NH4(+). Its function is as follows. This enzyme scavenges exogenous and endogenous cytidine and 2'-deoxycytidine for UMP synthesis. The protein is Cytidine deaminase (cdd) of Sporosarcina psychrophila (Bacillus psychrophilus).